A 311-amino-acid polypeptide reads, in one-letter code: Small ribosomal subunit biogenesis GTPase RsgA (311 aa).

A CP-type G domain is found at 88-246 (SKEKEQVIAA…VIDTPGIREF (159 aa)). GTP is bound by residues 137–140 (NKID) and 188–196 (GHSGVGKST). Positions 270, 275, 277, and 283 each coordinate Zn(2+).

Belongs to the TRAFAC class YlqF/YawG GTPase family. RsgA subfamily. In terms of assembly, monomer. Associates with 30S ribosomal subunit, binds 16S rRNA. The cofactor is Zn(2+).

The protein resides in the cytoplasm. Functionally, one of several proteins that assist in the late maturation steps of the functional core of the 30S ribosomal subunit. Helps release RbfA from mature subunits. May play a role in the assembly of ribosomal proteins into the subunit. Circularly permuted GTPase that catalyzes slow GTP hydrolysis, GTPase activity is stimulated by the 30S ribosomal subunit. The chain is Small ribosomal subunit biogenesis GTPase RsgA from Chlorobaculum parvum (strain DSM 263 / NCIMB 8327) (Chlorobium vibrioforme subsp. thiosulfatophilum).